Here is a 228-residue protein sequence, read N- to C-terminus: MKFLSIISLAVSLVAAAPVEVGLDTGVANLEARQSSTRNELESGSSSNCPKVIYIFARASTEPGNMGISAGPIVADALESRYGASQVWVQGVGGPYSADLASNFIIPEGTSRVAINEAKRLFTLANTKCPNSAVVAGGYSQGTAVMASSISELSSTIQNQIKGVVLSAITKNLQNLGRIPNFSTSKTEVYCALADAVCYGTLFILPAHFLYQADAATSAPRFLAARIG.

Positions 1–16 are cleaved as a signal peptide; sequence MKFLSIISLAVSLVAA. An intrachain disulfide couples Cys-49 to Cys-129. Ser-140 (nucleophile) is an active-site residue. Cysteines 191 and 198 form a disulfide. Residue Asp-195 is part of the active site. The Proton donor/acceptor role is filled by His-208.

The protein belongs to the cutinase family. In terms of processing, the 2 disulfide bonds play a critical role in holding the catalytic residues in juxta-position; reduction of the disulfide bridges results in the complete inactivation of the enzyme.

The protein resides in the secreted. It carries out the reaction cutin + H2O = cutin monomers.. Its activity is regulated as follows. Partially inhibited by berberine; higher inhibitory effects are observed with longer chain polyester substrates. Catalyzes the hydrolysis of complex carboxylic polyesters found in the cell wall of plants. Degrades cutin, a macromolecule that forms the structure of the plant cuticle. Allows pathogenic fungi to penetrate through the cuticular barrier into the host plant during the initial stage of fungal infection. This chain is Cutinase (CUTA), found in Colletotrichum truncatum (Anthracnose fungus).